The following is a 318-amino-acid chain: MTVITIAKRGLPKLTTSTSSTTTASSSSTITSVASSSSSLPLLSNSTSSSIIPSITPPSRNGNPYILDSGDMPNGTVFIVVGGIAGVIFLAILLWWVITTYSSHRLTRSVQDYESKMFSAQHTQFYGDSPYMDYPAKENFQDQVHISESDISPGNKDESVKDALVSHTNNEKPFLSNFERPLSSLVSESNRNSLFISPTGDILYKTRLSKLYQESPRLLQKPVIMTSDNVSTNSLVSTISSSSASSLDNGNEKEVGEDIRKPAKIASSPSRKLLNSPESDGSVNRNHSKGNLLVVQSKRKPTPSTYLEHMLEGKEQDE.

A helical transmembrane segment spans residues 78–98; sequence FIVVGGIAGVIFLAILLWWVI. A Phosphoserine modification is found at serine 129. The span at 238 to 247 shows a compositional bias: low complexity; sequence TISSSSASSL. A disordered region spans residues 238 to 318; that stretch reads TISSSSASSL…HMLEGKEQDE (81 aa). The span at 250 to 261 shows a compositional bias: basic and acidic residues; that stretch reads GNEKEVGEDIRK. Residues 276-285 are compositionally biased toward polar residues; it reads SPESDGSVNR. Phosphoserine is present on residues serine 279, serine 282, and serine 288. The segment covering 309–318 has biased composition (basic and acidic residues); sequence HMLEGKEQDE. Residue lysine 314 forms a Glycyl lysine isopeptide (Lys-Gly) (interchain with G-Cter in ubiquitin) linkage.

Belongs to the PRM5 family.

The protein resides in the membrane. This Saccharomyces cerevisiae (strain Lalvin EC1118 / Prise de mousse) (Baker's yeast) protein is Pheromone-regulated membrane protein 5 (PRM5).